We begin with the raw amino-acid sequence, 310 residues long: tRNA-cytidine(32) 2-sulfurtransferase (310 aa).

The PP-loop motif signature appears at 58 to 63 (SGGKDS). [4Fe-4S] cluster contacts are provided by cysteine 133, cysteine 136, and cysteine 224.

This sequence belongs to the TtcA family. Homodimer. The cofactor is Mg(2+). [4Fe-4S] cluster serves as cofactor.

It localises to the cytoplasm. It carries out the reaction cytidine(32) in tRNA + S-sulfanyl-L-cysteinyl-[cysteine desulfurase] + AH2 + ATP = 2-thiocytidine(32) in tRNA + L-cysteinyl-[cysteine desulfurase] + A + AMP + diphosphate + H(+). It functions in the pathway tRNA modification. Catalyzes the ATP-dependent 2-thiolation of cytidine in position 32 of tRNA, to form 2-thiocytidine (s(2)C32). The sulfur atoms are provided by the cysteine/cysteine desulfurase (IscS) system. The sequence is that of tRNA-cytidine(32) 2-sulfurtransferase from Paracidovorax citrulli (strain AAC00-1) (Acidovorax citrulli).